A 147-amino-acid chain; its full sequence is Ubiquitin-conjugating enzyme E2-16 kDa (147 aa).

In terms of domain architecture, UBC core spans 1–147 (MALKRINKEL…AREWTRKYAI (147 aa)). Residue cysteine 107 is the Glycyl thioester intermediate of the active site.

This sequence belongs to the ubiquitin-conjugating enzyme family.

The catalysed reaction is S-ubiquitinyl-[E1 ubiquitin-activating enzyme]-L-cysteine + [E2 ubiquitin-conjugating enzyme]-L-cysteine = [E1 ubiquitin-activating enzyme]-L-cysteine + S-ubiquitinyl-[E2 ubiquitin-conjugating enzyme]-L-cysteine.. The protein operates within protein modification; protein ubiquitination. In terms of biological role, catalyzes the covalent attachment of ubiquitin to other proteins. The sequence is that of Ubiquitin-conjugating enzyme E2-16 kDa (UBC1) from Pyricularia oryzae (strain 70-15 / ATCC MYA-4617 / FGSC 8958) (Rice blast fungus).